The following is an 83-amino-acid chain: Male-specific opa-containing protein (83 aa).

The N-terminal stretch at 1 to 18 (MNFIQIAVLFVLVAVALA) is a signal peptide. The disordered stretch occupies residues 23 to 83 (DPANLPAPEA…NVNHNVITIG (61 aa)). Over residues 28 to 49 (PAPEAAAAPPAAAAAPPAAAAA) the composition is skewed to low complexity. Residues 50–59 (PPAPPAPPAA) are compositionally biased toward pro residues.

Adult male abdomen.

Functionally, may be a male specific regulatory factor. This chain is Male-specific opa-containing protein (msopa), found in Drosophila melanogaster (Fruit fly).